A 365-amino-acid chain; its full sequence is 2-aminoethylphosphonate--pyruvate transaminase (365 aa).

The residue at position 194 (lysine 194) is an N6-(pyridoxal phosphate)lysine.

The protein belongs to the class-V pyridoxal-phosphate-dependent aminotransferase family. PhnW subfamily. As to quaternary structure, homodimer. Pyridoxal 5'-phosphate serves as cofactor.

The enzyme catalyses (2-aminoethyl)phosphonate + pyruvate = phosphonoacetaldehyde + L-alanine. Functionally, involved in phosphonate degradation. In Bacillus cytotoxicus (strain DSM 22905 / CIP 110041 / 391-98 / NVH 391-98), this protein is 2-aminoethylphosphonate--pyruvate transaminase.